Consider the following 333-residue polypeptide: Glyceraldehyde-3-phosphate dehydrogenase (333 aa).

At serine 1 the chain carries N-acetylserine. Residues 10-11 (RI), aspartate 31, and methionine 76 each bind NAD(+). D-glyceraldehyde 3-phosphate contacts are provided by residues 147-149 (SCT), threonine 178, 207-208 (TG), and arginine 230. Residue cysteine 148 is the Nucleophile of the active site. Asparagine 312 is an NAD(+) binding site.

This sequence belongs to the glyceraldehyde-3-phosphate dehydrogenase family. In terms of assembly, homotetramer.

Its subcellular location is the cytoplasm. It catalyses the reaction D-glyceraldehyde 3-phosphate + phosphate + NAD(+) = (2R)-3-phospho-glyceroyl phosphate + NADH + H(+). It participates in carbohydrate degradation; glycolysis; pyruvate from D-glyceraldehyde 3-phosphate: step 1/5. The chain is Glyceraldehyde-3-phosphate dehydrogenase from Panulirus versicolor (Painted spiny lobster).